Here is a 295-residue protein sequence, read N- to C-terminus: ATP synthase gamma chain (295 aa).

Belongs to the ATPase gamma chain family. In terms of assembly, F-type ATPases have 2 components, CF(1) - the catalytic core - and CF(0) - the membrane proton channel. CF(1) has five subunits: alpha(3), beta(3), gamma(1), delta(1), epsilon(1). CF(0) has three main subunits: a, b and c.

The protein resides in the cell inner membrane. Functionally, produces ATP from ADP in the presence of a proton gradient across the membrane. The gamma chain is believed to be important in regulating ATPase activity and the flow of protons through the CF(0) complex. This Maricaulis maris (strain MCS10) (Caulobacter maris) protein is ATP synthase gamma chain.